The chain runs to 94 residues: Integration host factor subunit beta (94 aa).

Belongs to the bacterial histone-like protein family. As to quaternary structure, heterodimer of an alpha and a beta chain.

In terms of biological role, this protein is one of the two subunits of integration host factor, a specific DNA-binding protein that functions in genetic recombination as well as in transcriptional and translational control. The chain is Integration host factor subunit beta from Haemophilus influenzae (strain 86-028NP).